Consider the following 215-residue polypeptide: Histidine biosynthesis bifunctional protein HisIE (215 aa).

Residues Met1–Met126 are phosphoribosyl-AMP cyclohydrolase. A phosphoribosyl-ATP pyrophosphohydrolase region spans residues Leu127 to Arg215.

It in the N-terminal section; belongs to the PRA-CH family. In the C-terminal section; belongs to the PRA-PH family.

It localises to the cytoplasm. It carries out the reaction 1-(5-phospho-beta-D-ribosyl)-ATP + H2O = 1-(5-phospho-beta-D-ribosyl)-5'-AMP + diphosphate + H(+). The enzyme catalyses 1-(5-phospho-beta-D-ribosyl)-5'-AMP + H2O = 1-(5-phospho-beta-D-ribosyl)-5-[(5-phospho-beta-D-ribosylamino)methylideneamino]imidazole-4-carboxamide. It participates in amino-acid biosynthesis; L-histidine biosynthesis; L-histidine from 5-phospho-alpha-D-ribose 1-diphosphate: step 2/9. The protein operates within amino-acid biosynthesis; L-histidine biosynthesis; L-histidine from 5-phospho-alpha-D-ribose 1-diphosphate: step 3/9. The polypeptide is Histidine biosynthesis bifunctional protein HisIE (hisI) (Synechocystis sp. (strain ATCC 27184 / PCC 6803 / Kazusa)).